The primary structure comprises 783 residues: Centrosomal protein of 89 kDa (783 aa).

The disordered stretch occupies residues 28-49 (PKAAVPRTPPPRSPNPSPERPR). Over residues 34–45 (RTPPPRSPNPSP) the composition is skewed to pro residues. S50 is modified (phosphoserine). 2 disordered regions span residues 63 to 157 (GRTV…DDLY) and 176 to 226 (DENI…DITG). Polar residues predominate over residues 94-107 (ATTSQLRPRPNWQS). Basic and acidic residues-rich tracts occupy residues 139 to 155 (ELGDVSAREDRGGHSDD) and 196 to 214 (QQKDGKHPVLNLKDEKPPL). Coiled coils occupy residues 234–333 (EITR…SRYQ) and 369–719 (LLLA…GELE).

It is found in the cytoplasm. It localises to the cytosol. The protein localises to the cytoskeleton. Its subcellular location is the microtubule organizing center. The protein resides in the centrosome. It is found in the spindle pole. It localises to the centriole. The protein localises to the mitochondrion intermembrane space. Functionally, required for ciliogenesis. Also plays a role in mitochondrial metabolism where it may modulate complex IV activity. This is Centrosomal protein of 89 kDa (CEP89) from Homo sapiens (Human).